Reading from the N-terminus, the 622-residue chain is Carbon monoxide dehydrogenase (622 aa).

5 residues coordinate [4Fe-4S] cluster: C40, C49, C52, C57, and C68. [Ni-4Fe-5S] cluster contacts are provided by H256, C334, C442, C473, and C514.

It belongs to the Ni-containing carbon monoxide dehydrogenase family. Homodimer. The cofactor is [4Fe-4S] cluster. Requires [Ni-4Fe-5S] cluster as cofactor.

The catalysed reaction is CO + 2 oxidized [2Fe-2S]-[ferredoxin] + H2O = 2 reduced [2Fe-2S]-[ferredoxin] + CO2 + 2 H(+). Its function is as follows. CODH oxidizes carbon monoxide coupled, via CooF, to the reduction of a hydrogen cation by a hydrogenase (possibly CooH). This is Carbon monoxide dehydrogenase (cooS) from Archaeoglobus fulgidus (strain ATCC 49558 / DSM 4304 / JCM 9628 / NBRC 100126 / VC-16).